Reading from the N-terminus, the 179-residue chain is Large ribosomal subunit protein uL5 (179 aa).

This sequence belongs to the universal ribosomal protein uL5 family. Part of the 50S ribosomal subunit; part of the 5S rRNA/L5/L18/L25 subcomplex. Contacts the 5S rRNA and the P site tRNA. Forms a bridge to the 30S subunit in the 70S ribosome.

Functionally, this is one of the proteins that bind and probably mediate the attachment of the 5S RNA into the large ribosomal subunit, where it forms part of the central protuberance. In the 70S ribosome it contacts protein S13 of the 30S subunit (bridge B1b), connecting the 2 subunits; this bridge is implicated in subunit movement. Contacts the P site tRNA; the 5S rRNA and some of its associated proteins might help stabilize positioning of ribosome-bound tRNAs. This Burkholderia multivorans (strain ATCC 17616 / 249) protein is Large ribosomal subunit protein uL5.